A 148-amino-acid chain; its full sequence is MHEAPRGFLEGEALRPRPFRAGLGHLGWIFAGGALGAAARLAVEGAARRLAPAAYEAFPWGTLAANAAGSFLIAIFGTLIFERFVGERARAFWVLGFLGSLTTFSSYALHTLRGWEASPLLGGLYGGGSLLLGLLAALAGLRLTRRLL.

The next 4 helical transmembrane spans lie at 23–43 (LGHL…RLAV), 61–81 (GTLA…TLIF), 92–112 (FWVL…LHTL), and 120–140 (LLGG…ALAG). Residues G99 and T102 each contribute to the Na(+) site.

It belongs to the fluoride channel Fluc/FEX (TC 1.A.43) family.

It is found in the cell membrane. The enzyme catalyses fluoride(in) = fluoride(out). With respect to regulation, na(+) is not transported, but it plays an essential structural role and its presence is essential for fluoride channel function. Its function is as follows. Fluoride-specific ion channel. Important for reducing fluoride concentration in the cell, thus reducing its toxicity. In Rubrobacter xylanophilus (strain DSM 9941 / JCM 11954 / NBRC 16129 / PRD-1), this protein is Fluoride-specific ion channel FluC 2.